A 430-amino-acid chain; its full sequence is GTPase Obg (430 aa).

The Obg domain maps to 1–158 (MFVDQVKISL…LDVSLELKLL (158 aa)). Positions 118–145 (KGGRGGRGNSRFATPRNPAPDFSEKGEP) are disordered. Residues 159–329 (ADVGLVGFPS…LLYAIADKLE (171 aa)) enclose the OBG-type G domain. GTP contacts are provided by residues 165 to 172 (GFPSVGKS), 190 to 194 (FTTIK), 212 to 215 (DLPG), 282 to 285 (NKMD), and 310 to 312 (STI). Positions 172 and 192 each coordinate Mg(2+). Positions 352-430 (KHTPSQDKFT…ILGGEFEFVE (79 aa)) constitute an OCT domain.

The protein belongs to the TRAFAC class OBG-HflX-like GTPase superfamily. OBG GTPase family. In terms of assembly, monomer. It depends on Mg(2+) as a cofactor.

The protein resides in the cytoplasm. In terms of biological role, an essential GTPase which binds GTP, GDP and possibly (p)ppGpp with moderate affinity, with high nucleotide exchange rates and a fairly low GTP hydrolysis rate. Plays a role in control of the cell cycle, stress response, ribosome biogenesis and in those bacteria that undergo differentiation, in morphogenesis control. The polypeptide is GTPase Obg (Staphylococcus aureus (strain bovine RF122 / ET3-1)).